Consider the following 452-residue polypeptide: Agmatine coumaroyltransferase (452 aa).

Residues His163 and Asp396 each act as proton acceptor in the active site.

Belongs to the plant acyltransferase family.

It carries out the reaction 4-coumaroyl-CoA + agmatine = N-(4-guanidinobutyl)-4-hydroxycinnamamide + CoA + H(+). In terms of biological role, involved in the biosynthesis of hydroxycinnamic acid amides, which play a role in defense against pathogens. Agmatine is the preferred acyl acceptor, lower activity is observed towards putrescine. The preferred acyl donor is p-coumaroyl-CoA, lower activity is seen towards feruloyl-CoA. This Arabidopsis thaliana (Mouse-ear cress) protein is Agmatine coumaroyltransferase.